A 327-amino-acid polypeptide reads, in one-letter code: Flotillin-like protein FloA (327 aa).

Helical transmembrane passes span 6-26 (VLFF…FTFV) and 28-48 (IMLW…TLVG).

The protein belongs to the flotillin-like FloA family. As to quaternary structure, homooligomerizes.

The protein localises to the cell membrane. Its subcellular location is the membrane raft. Found in functional membrane microdomains (FMM) that may be equivalent to eukaryotic membrane rafts. FMMs are highly dynamic and increase in number as cells age. Flotillins are thought to be important factors in membrane fluidity. This chain is Flotillin-like protein FloA, found in Priestia megaterium (strain DSM 319 / IMG 1521) (Bacillus megaterium).